A 311-amino-acid chain; its full sequence is Mitochondrial FAD carrier protein FLX1 (311 aa).

3 Solcar repeats span residues 7–101 (TPLQ…TKEL), 123–210 (MNSL…LKQR), and 224–310 (LTNL…LKHR). 6 consecutive transmembrane segments (helical) span residues 13-33 (VISG…LDLL), 77-97 (LSIN…LYGV), 129-149 (LSAG…IWVI), 183-203 (LWKG…YFAV), 230-250 (IEIT…FQLL), and 266-286 (LFPL…YKGL).

Belongs to the mitochondrial carrier (TC 2.A.29) family.

Its subcellular location is the mitochondrion inner membrane. Transport of FAD from the cytosol to the mitochondrial matrix. This is Mitochondrial FAD carrier protein FLX1 (FLX1) from Saccharomyces cerevisiae (strain ATCC 204508 / S288c) (Baker's yeast).